The sequence spans 184 residues: Outer-membrane lipoprotein carrier protein (184 aa).

Positions 1–19 (MKAFLKILMVLIFVSVAYA) are cleaved as a signal peptide.

It belongs to the LolA family. Monomer.

The protein resides in the periplasm. Functionally, participates in the translocation of lipoproteins from the inner membrane to the outer membrane. Only forms a complex with a lipoprotein if the residue after the N-terminal Cys is not an aspartate (The Asp acts as a targeting signal to indicate that the lipoprotein should stay in the inner membrane). This chain is Outer-membrane lipoprotein carrier protein, found in Helicobacter pylori (strain P12).